The primary structure comprises 181 residues: Cytochrome c-type biogenesis protein CcmE (181 aa).

At Met1–Arg8 the chain is on the cytoplasmic side. Residues Leu9–Ala29 form a helical; Signal-anchor for type II membrane protein membrane-spanning segment. Over Leu30–Lys181 the chain is Periplasmic. Residues His131 and Tyr135 each contribute to the heme site.

It belongs to the CcmE/CycJ family.

The protein localises to the cell inner membrane. In terms of biological role, heme chaperone required for the biogenesis of c-type cytochromes. Transiently binds heme delivered by CcmC and transfers the heme to apo-cytochromes in a process facilitated by CcmF and CcmH. This Haemophilus ducreyi (strain 35000HP / ATCC 700724) protein is Cytochrome c-type biogenesis protein CcmE.